The primary structure comprises 123 residues: Small ribosomal subunit protein bS18 (123 aa).

Polar residues predominate over residues 1–10 (MADETTVSTP). A disordered region spans residues 1-52 (MADETTVSTPAASGTETPSTGGGGAPQGRPQGGPRGDRGPRPGGSGRDGGRK). Residues 20-34 (TGGGGAPQGRPQGGP) show a composition bias toward gly residues.

Belongs to the bacterial ribosomal protein bS18 family. As to quaternary structure, part of the 30S ribosomal subunit. Forms a tight heterodimer with protein bS6.

Binds as a heterodimer with protein bS6 to the central domain of the 16S rRNA, where it helps stabilize the platform of the 30S subunit. This is Small ribosomal subunit protein bS18 from Koribacter versatilis (strain Ellin345).